A 558-amino-acid chain; its full sequence is Dihydroxy-acid dehydratase (558 aa).

Cysteine 48 lines the [2Fe-2S] cluster pocket. Aspartate 80 is a binding site for Mg(2+). Cysteine 121 lines the [2Fe-2S] cluster pocket. The Mg(2+) site is built by aspartate 122 and lysine 123. N6-carboxylysine is present on lysine 123. Residue cysteine 193 coordinates [2Fe-2S] cluster. Glutamate 445 serves as a coordination point for Mg(2+). Serine 471 (proton acceptor) is an active-site residue.

This sequence belongs to the IlvD/Edd family. In terms of assembly, homodimer. [2Fe-2S] cluster is required as a cofactor. Mg(2+) serves as cofactor.

The enzyme catalyses (2R)-2,3-dihydroxy-3-methylbutanoate = 3-methyl-2-oxobutanoate + H2O. It catalyses the reaction (2R,3R)-2,3-dihydroxy-3-methylpentanoate = (S)-3-methyl-2-oxopentanoate + H2O. It participates in amino-acid biosynthesis; L-isoleucine biosynthesis; L-isoleucine from 2-oxobutanoate: step 3/4. The protein operates within amino-acid biosynthesis; L-valine biosynthesis; L-valine from pyruvate: step 3/4. Its function is as follows. Functions in the biosynthesis of branched-chain amino acids. Catalyzes the dehydration of (2R,3R)-2,3-dihydroxy-3-methylpentanoate (2,3-dihydroxy-3-methylvalerate) into 2-oxo-3-methylpentanoate (2-oxo-3-methylvalerate) and of (2R)-2,3-dihydroxy-3-methylbutanoate (2,3-dihydroxyisovalerate) into 2-oxo-3-methylbutanoate (2-oxoisovalerate), the penultimate precursor to L-isoleucine and L-valine, respectively. This chain is Dihydroxy-acid dehydratase, found in Prochlorococcus marinus (strain SARG / CCMP1375 / SS120).